Reading from the N-terminus, the 123-residue chain is Large ribosomal subunit protein bL17 (123 aa).

Belongs to the bacterial ribosomal protein bL17 family. In terms of assembly, part of the 50S ribosomal subunit. Contacts protein L32.

The protein is Large ribosomal subunit protein bL17 of Staphylococcus haemolyticus (strain JCSC1435).